Reading from the N-terminus, the 38-residue chain is U9-ctenitoxin-Pk1a (38 aa).

4 disulfide bridges follow: C2-C17, C9-C22, C16-C36, and C24-C34.

Expressed by the venom gland.

Its subcellular location is the secreted. This chain is U9-ctenitoxin-Pk1a, found in Phoneutria keyserlingi (Brazilian wandering spider).